We begin with the raw amino-acid sequence, 74 residues long: Lambda-hexatoxin-Hv1e (74 aa).

An N-terminal signal peptide occupies residues 1–22 (MNTATCFIVLLVVATVIGGIEA). A propeptide spanning residues 23–35 (GEFDMRKDVMGLF) is cleaved from the precursor. Cystine bridges form between cysteine 40-cysteine 54, cysteine 47-cysteine 59, cysteine 50-cysteine 51, and cysteine 53-cysteine 69.

It belongs to the neurotoxin 11 (kappa toxin) family. As to expression, expressed by the venom gland.

It is found in the secreted. Functionally, this excitatory toxin inhibits insect calcium-activated potassium (KCa) channels (Slo-type). This chain is Lambda-hexatoxin-Hv1e, found in Hadronyche versuta (Blue mountains funnel-web spider).